A 333-amino-acid polypeptide reads, in one-letter code: 6-phosphogluconolactonase (333 aa).

The protein belongs to the cycloisomerase 2 family.

The enzyme catalyses 6-phospho-D-glucono-1,5-lactone + H2O = 6-phospho-D-gluconate + H(+). The protein operates within carbohydrate degradation; pentose phosphate pathway; D-ribulose 5-phosphate from D-glucose 6-phosphate (oxidative stage): step 2/3. Functionally, catalyzes the hydrolysis of 6-phosphogluconolactone to 6-phosphogluconate. The polypeptide is 6-phosphogluconolactonase (Yersinia enterocolitica serotype O:8 / biotype 1B (strain NCTC 13174 / 8081)).